We begin with the raw amino-acid sequence, 371 residues long: 3-dehydroquinate synthase (371 aa).

Residues 72-77 (DGEEHK), 106-110 (GVVGD), 130-131 (TT), lysine 143, lysine 152, and 170-173 (TLKT) each bind NAD(+). Zn(2+) is bound by residues glutamate 185, histidine 248, and histidine 265.

It belongs to the sugar phosphate cyclases superfamily. Dehydroquinate synthase family. Co(2+) is required as a cofactor. Requires Zn(2+) as cofactor. It depends on NAD(+) as a cofactor.

It is found in the cytoplasm. It carries out the reaction 7-phospho-2-dehydro-3-deoxy-D-arabino-heptonate = 3-dehydroquinate + phosphate. The protein operates within metabolic intermediate biosynthesis; chorismate biosynthesis; chorismate from D-erythrose 4-phosphate and phosphoenolpyruvate: step 2/7. Functionally, catalyzes the conversion of 3-deoxy-D-arabino-heptulosonate 7-phosphate (DAHP) to dehydroquinate (DHQ). The sequence is that of 3-dehydroquinate synthase from Pelotomaculum thermopropionicum (strain DSM 13744 / JCM 10971 / SI).